The following is a 175-amino-acid chain: Peptide deformylase (175 aa).

C94 and H136 together coordinate Fe cation. E137 is a catalytic residue. H140 is a Fe cation binding site.

Belongs to the polypeptide deformylase family. It depends on Fe(2+) as a cofactor.

The enzyme catalyses N-terminal N-formyl-L-methionyl-[peptide] + H2O = N-terminal L-methionyl-[peptide] + formate. Its function is as follows. Removes the formyl group from the N-terminal Met of newly synthesized proteins. Requires at least a dipeptide for an efficient rate of reaction. N-terminal L-methionine is a prerequisite for activity but the enzyme has broad specificity at other positions. The chain is Peptide deformylase from Brucella suis biovar 1 (strain 1330).